Here is a 184-residue protein sequence, read N- to C-terminus: Adenine phosphoribosyltransferase 2 (184 aa).

The protein belongs to the purine/pyrimidine phosphoribosyltransferase family. In terms of assembly, homodimer.

The protein resides in the cytoplasm. The enzyme catalyses AMP + diphosphate = 5-phospho-alpha-D-ribose 1-diphosphate + adenine. It functions in the pathway purine metabolism; AMP biosynthesis via salvage pathway; AMP from adenine: step 1/1. Catalyzes a salvage reaction resulting in the formation of AMP, that is energically less costly than de novo synthesis. The sequence is that of Adenine phosphoribosyltransferase 2 from Rhizobium etli (strain ATCC 51251 / DSM 11541 / JCM 21823 / NBRC 15573 / CFN 42).